Consider the following 491-residue polypeptide: NADH-quinone oxidoreductase subunit N 1 (491 aa).

The next 14 helical transmembrane spans lie at 15 to 35, 41 to 61, 77 to 97, 105 to 125, 130 to 150, 165 to 185, 211 to 231, 247 to 269, 279 to 299, 307 to 327, 333 to 353, 378 to 398, 416 to 436, and 459 to 479; these read VLGM…VDMF, VLLT…ALDY, FGVL…LIAF, LSQG…LFLV, LVTI…LTGF, LLLG…IYGM, PILL…VSMF, PVTA…RFLN, WQLL…IVAV, MLAY…LAAS, AFTV…AVLI, LALA…TAGF, LAII…RVIV, and LGVI…NIFT.

This sequence belongs to the complex I subunit 2 family. NDH-1 is composed of 14 different subunits. Subunits NuoA, H, J, K, L, M, N constitute the membrane sector of the complex.

It is found in the cell membrane. The enzyme catalyses a quinone + NADH + 5 H(+)(in) = a quinol + NAD(+) + 4 H(+)(out). NDH-1 shuttles electrons from NADH, via FMN and iron-sulfur (Fe-S) centers, to quinones in the respiratory chain. The immediate electron acceptor for the enzyme in this species is believed to be ubiquinone. Couples the redox reaction to proton translocation (for every two electrons transferred, four hydrogen ions are translocated across the cytoplasmic membrane), and thus conserves the redox energy in a proton gradient. The chain is NADH-quinone oxidoreductase subunit N 1 from Herpetosiphon aurantiacus (strain ATCC 23779 / DSM 785 / 114-95).